The chain runs to 568 residues: Calcium-dependent protein kinase 5 (568 aa).

Residues 125–379 (EIDRYKLGKG…VEQVLKHRWF (255 aa)) form the Protein kinase domain. ATP-binding positions include 131 to 139 (LGKGSYGNV) and Lys-154. Catalysis depends on Asp-245, which acts as the Proton acceptor. The J domain autoinhibitory motif motif lies at 400–408 (KFKEFHKLC). The tract at residues 400–435 (KFKEFHKLCKIKKLAVTCIAYQLNEKDIGKLKKTFE) is j domain. A J domain EF-hand interaction motif motif is present at residues 409–418 (KIKKLAVTCI). 4 EF-hand domains span residues 425 to 460 (KDIGKLKKTFEAFDHNGDGVLTISEIFQCLKVNDNE), 462 to 495 (DRELYFLLKQLDTDGNGLIDYTEFLAACLDHSIF), 496 to 531 (QQDVICRNAFNVFDLDGDGVITKDELFKILSFSAVQ), and 534 to 568 (FSKEIIENLIKEVDSNNDGFIDYDEFYKMMTGVKE). Residues Asp-438, Asn-440, Asp-442, Glu-449, Asp-473, Asp-475, Asn-477, Glu-484, Asp-509, Asp-511, Asp-513, Glu-520, Asp-547, Asn-549, Asp-551, and Glu-558 each coordinate Ca(2+).

This sequence belongs to the protein kinase superfamily. Ser/Thr protein kinase family. CDPK subfamily. The cofactor is Mg(2+). In terms of processing, may be palmitoylated. Autophosphorylated in vitro.

It localises to the cytoplasm. Its subcellular location is the cytoplasmic vesicle. The protein resides in the secretory vesicle. It is found in the microneme membrane. The protein localises to the cell membrane. The enzyme catalyses L-seryl-[protein] + ATP = O-phospho-L-seryl-[protein] + ADP + H(+). The catalysed reaction is L-threonyl-[protein] + ATP = O-phospho-L-threonyl-[protein] + ADP + H(+). With respect to regulation, activated by calcium. Upon calcium binding to the EF-hand domains, the C-terminus of the junction domain (J domain) undergoes a conformational change which results in the dissociation of the pseudo-substrate inhibitory motif from the catalytic domain. This, in turn, may facilitate the autophosphorylation of the activation loop at Thr-285, which leads to the kinase activation. Its function is as follows. Calcium-dependent protein kinase which acts as a sensor and effector of intracellular Ca(2+) levels probably in part downstream of cGMP-activated PKG kinase. Plays a central role in host erythrocytes and hepatocytes infection cycles. During the liver stage, involved in sporozoite motility and thus in sporozoite invasion of host hepatocytes, probably together with CDPK1 and CDPK4. Involved in merosome egress from host hepatocytes, probably together with CDPK4. Required for the release of hepatic merozoites from merosomes in the host blood stream. During the asexual blood stage, required for merozoite egress from host erythrocytes by triggering microneme secretion. Phosphorylates transporter NPT1 at late schizont stage. This is Calcium-dependent protein kinase 5 from Plasmodium falciparum (isolate 3D7).